We begin with the raw amino-acid sequence, 164 residues long: S-ribosylhomocysteine lyase (164 aa).

Residues histidine 61, histidine 65, and cysteine 131 each coordinate Fe cation.

This sequence belongs to the LuxS family. Homodimer. Fe cation is required as a cofactor.

The catalysed reaction is S-(5-deoxy-D-ribos-5-yl)-L-homocysteine = (S)-4,5-dihydroxypentane-2,3-dione + L-homocysteine. In terms of biological role, involved in the synthesis of autoinducer 2 (AI-2) which is secreted by bacteria and is used to communicate both the cell density and the metabolic potential of the environment. The regulation of gene expression in response to changes in cell density is called quorum sensing. Catalyzes the transformation of S-ribosylhomocysteine (RHC) to homocysteine (HC) and 4,5-dihydroxy-2,3-pentadione (DPD). This Bifidobacterium longum (strain NCC 2705) protein is S-ribosylhomocysteine lyase.